A 512-amino-acid polypeptide reads, in one-letter code: PTS system mannitol-specific EIICB component (512 aa).

Residues 1 to 28 (MSQTEEKKGIGRRVQAFGSFLSSMIMPN) lie on the Cytoplasmic side of the membrane. One can recognise a PTS EIIC type-2 domain in the interval 17 to 349 (FGSFLSSMIM…MKFTREPKQD (333 aa)). The chain crosses the membrane as a helical span at residues 29-50 (IGAFIAWGFIAAIFIDNGWLPN). The Extracellular portion of the chain corresponds to 51 to 54 (KDLA). A helical membrane pass occupies residues 55-75 (TLAGPMITYLIPLLIAFSGGR). Residues 76-139 (LIYDLRGGII…QGFEMLFNNF (64 aa)) are Cytoplasmic-facing. Residues 140 to 161 (SAGILGFIMTIAGFKILAPLMK) form a helical membrane-spanning segment. Over 162-170 (FIMHILSVA) the chain is Extracellular. Residues 171-191 (VEALVHAHLLPLVSILVEPAK) traverse the membrane as a helical segment. The Cytoplasmic segment spans residues 192–278 (IVFLNNAINH…VLMRPLLFIA (87 aa)). A helical membrane pass occupies residues 279–298 (VILGGMTGVATYQATGFGFK). Topologically, residues 299-318 (SPASPGSFIVYCLNAPRGEF) are extracellular. Residues 319–340 (LHMLLGVFLAALVSFVVAALIM) form a helical membrane-spanning segment. Topologically, residues 341–512 (KFTREPKQDL…LNNLKKDDQA (172 aa)) are cytoplasmic. Positions 355-402 (AQMENTKGKKSSVASKLVSSDKNVNTEENASGNVSETSSSDDDPEALL) are disordered. Residues 365–376 (SSVASKLVSSDK) show a composition bias toward low complexity. A compositionally biased stretch (polar residues) spans 380-392 (TEENASGNVSETS). The region spanning 419 to 512 (NHVIFACDAG…LNNLKKDDQA (94 aa)) is the PTS EIIB type-2 domain. Cys-425 functions as the Phosphocysteine intermediate; for EIIB activity in the catalytic mechanism. A Phosphocysteine; by EIIA modification is found at Cys-425.

In terms of assembly, homodimer.

It is found in the cell membrane. The catalysed reaction is D-mannitol(out) + N(pros)-phospho-L-histidyl-[protein] = D-mannitol 1-phosphate(in) + L-histidyl-[protein]. In terms of biological role, the phosphoenolpyruvate-dependent sugar phosphotransferase system (sugar PTS), a major carbohydrate active transport system, catalyzes the phosphorylation of incoming sugar substrates concomitantly with their translocation across the cell membrane. The enzyme II CmtAB PTS system is involved in D-mannitol transport. This Staphylococcus aureus (strain COL) protein is PTS system mannitol-specific EIICB component (mtlA).